We begin with the raw amino-acid sequence, 429 residues long: Glucose-6-phosphate isomerase (429 aa).

The active-site Proton donor is the Glu282. Active-site residues include His303 and Lys418.

The protein belongs to the GPI family.

It is found in the cytoplasm. The catalysed reaction is alpha-D-glucose 6-phosphate = beta-D-fructose 6-phosphate. It functions in the pathway carbohydrate biosynthesis; gluconeogenesis. The protein operates within carbohydrate degradation; glycolysis; D-glyceraldehyde 3-phosphate and glycerone phosphate from D-glucose: step 2/4. In terms of biological role, catalyzes the reversible isomerization of glucose-6-phosphate to fructose-6-phosphate. The chain is Glucose-6-phosphate isomerase from Mesomycoplasma hyopneumoniae (strain 7448) (Mycoplasma hyopneumoniae).